The chain runs to 261 residues: Early E1A protein (261 aa).

The interaction with RB1 in competition with E2F1 stretch occupies residues 43–51; that stretch reads PTLHDLYDL. Residues 78 to 149 form an interaction with UBE2I region; sequence EGLDINPPPE…VNEGVKAASD (72 aa). Residues 106 to 110 carry the PXLXP motif, interaction with host ZMYND11 motif; it reads PDLGA. The LXCXE motif, interaction with host RB1 and TMEM173/STING signature appears at 115–119; the sequence is LRCYE. The segment at 163 to 183 is a zinc-finger region; it reads CKSCEFHRNNTGMKELLCSLC. The segment at 197–261 is disordered; that stretch reads SDDESPSPDS…DLSTRKLPRQ (65 aa). Residues 203 to 212 show a composition bias toward low complexity; that stretch reads SPDSTTSPPE. Positions 250–254 match the PXDLS motif, CTBP-binding motif; that stretch reads PLDLS. Residues 256–261 carry the Nuclear localization signal motif; sequence RKLPRQ.

It belongs to the adenoviridae E1A protein family. Interacts with host UBE2I; this interaction interferes with polySUMOylation. Interacts with host RB1; this interaction induces the aberrant dissociation of RB1-E2F1 complex thereby disrupting the activity of RB1 and activating E2F1-regulated genes. Interacts with host ATF7; the interaction enhances ATF7-mediated viral transactivation activity which requires the zinc binding domains of both proteins. Isoform early E1A 32 kDa protein and isoform early E1A 26 kDa protein interact (via N-terminus) with CUL1 and E3 ubiquitin ligase RBX1; these interactions inhibit RBX1-CUL1-dependent elongation reaction of ubiquitin chains and attenuate ubiquitination of SCF(FBXW7) target proteins. Interacts (via PXLXP motif) with host ZMYND11/BS69 (via MYND-type zinc finger); this interaction inhibits E1A mediated transactivation. Interacts with host EP300; this interaction stimulates the acetylation of RB1 by recruiting EP300 and RB1 into a multimeric-protein complex. Interacts with host CTBP1 and CTBP2; this interaction seems to potentiate viral replication. Interacts with host DCAF7. Interacts with host DYRK1A. Interacts with host KPNA4; this interaction allows E1A import into the host nucleus. Interacts with host EP400; this interaction stabilizes MYC. Interacts with host TBP protein; this interaction probably disrupts the TBP-TATA complex. Interacts (via LXCXE motif) with host TMEM173/STING; this interaction impairs the ability of TMEM173/STING to sense cytosolic DNA and promote the production of type I interferon (IFN-alpha and IFN-beta). Interacts (via C-terminus) with host ZBED1/hDREF (via C-terminus); the interaction is direct.

The protein resides in the host nucleus. Functionally, plays a role in viral genome replication by driving entry of quiescent cells into the cell cycle. Stimulation of progression from G1 to S phase allows the virus to efficiently use the cellular DNA replicating machinery to achieve viral genome replication. E1A protein has both transforming and trans-activating activities. Induces the disassembly of the E2F1 transcription factor from RB1 by direct competition for the same binding site on RB1, with subsequent transcriptional activation of E2F1-regulated S-phase genes and of the E2 region of the adenoviral genome. Release of E2F1 leads to the ARF-mediated inhibition of MDM2 and causes TP53/p53 to accumulate because it is not targeted for degradation by MDM2-mediated ubiquitination anymore. This increase in TP53, in turn, would arrest the cell proliferation and direct its death but this effect is counteracted by the viral protein E1B-55K. Inactivation of the ability of RB1 to arrest the cell cycle is critical for cellular transformation, uncontrolled cellular growth and proliferation induced by viral infection. Interaction with RBX1 and CUL1 inhibits ubiquitination of the proteins targeted by SCF(FBXW7) ubiquitin ligase complex, and may be linked to unregulated host cell proliferation. The tumorigenesis-restraining activity of E1A may be related to the disruption of the host CtBP-CtIP complex through the CtBP binding motif. Interaction with host TMEM173/STING impairs the ability of TMEM173/STING to sense cytosolic DNA and promote the production of type I interferon (IFN-alpha and IFN-beta). Promotes the sumoylation of host ZBED1/hDREF with SUMO1. This Human adenovirus B serotype 7 (HAdV-7) protein is Early E1A protein.